The chain runs to 817 residues: MSVILDDDVLLILTLDEELSAPLTPSNGLGQEDLPSKNGGGQSGPNSQVPSLVSGADSPPSSPPGHNWEMNYQEAAIYLQEGQNNDKFFTHPKDARALAAYLFVHNHFFYMMELLTALLLLLLSLCESPAVPALKLRTYVHATLELFALMVVVFELCMKLRWLGFHTFVRHKRTMVKTSVLVVQFIEAIVVLVRQTSHVRVTRALRCIFLVDCRYCGGVRRNLRQIFQSLPPFMDILLLLLFFMIIFAILGFYLFSTNPSDPYFNTLENSIVNLFVLLTTANFPDVMMPSYSRNPWSCVFFIVYLSIELYFIMNLLLAVVFDTFNDIEKHKFKSLLLHKRTAIQHAYHLLVSQRRPAGISYRQFEGLMRFYKPRMSARERFLTFKALNQSNTPLLSLKDFYDIYEVAALQWKAKKNRQHWFDELPRTAFLIFKGINILVNSKAFQYFMYLVVAVNGVWILVETFMLKGGNFISKHVPWSYLVFLTIYGVELFMKVAGLGPVEYLSSGWNLFDFSVTAFAFLGLLALTLNMEPFYFIVVLRPLQLLRLFKLKKRYRNVLDTMFELLPRMASLGLTLLTFYYSFAIVGMEFFSGRLSPNCCNSSTVADAYRFINHTVGNKTKVEEGYYYLNNFDNILNSFVTLFELTVVNNWYIIMEGVTSQTSHWSRLYFMTFYIVTMVVMTIIVAFILEAFVFRMNYSRKSQESEVDSGIVIEKEMSKEELLAILELHREARGTSSDVTRLLDTLSQMEKYQQNSMVFLGRRSRTKSDLSLKMYQEEIQEWYEEHAREQEQQQLRGSAPSPAAQQTPGSRQRSQTVT.

The Cytoplasmic segment spans residues 1–101; the sequence is MSVILDDDVL…PKDARALAAY (101 aa). Positions 22-66 are disordered; that stretch reads PLTPSNGLGQEDLPSKNGGGQSGPNSQVPSLVSGADSPPSSPPGH. A helical membrane pass occupies residues 102 to 122; that stretch reads LFVHNHFFYMMELLTALLLLL. Over 123–137 the chain is Extracellular; the sequence is LSLCESPAVPALKLR. A helical transmembrane segment spans residues 138–158; sequence TYVHATLELFALMVVVFELCM. At 159 to 172 the chain is on the cytoplasmic side; that stretch reads KLRWLGFHTFVRHK. The helical transmembrane segment at 173-193 threads the bilayer; the sequence is RTMVKTSVLVVQFIEAIVVLV. The Extracellular portion of the chain corresponds to 194–202; the sequence is RQTSHVRVT. Residues 203–221 form a helical membrane-spanning segment; sequence RALRCIFLVDCRYCGGVRR. The Cytoplasmic portion of the chain corresponds to 222 to 235; the sequence is NLRQIFQSLPPFMD. Residues 236-256 traverse the membrane as a helical segment; that stretch reads ILLLLLFFMIIFAILGFYLFS. The Extracellular segment spans residues 257–263; sequence TNPSDPY. Positions 264-287 form an intramembrane region, helical; Pore-forming; the sequence is FNTLENSIVNLFVLLTTANFPDVM. At 288–298 the chain is on the extracellular side; the sequence is MPSYSRNPWSC. The helical transmembrane segment at 299–319 threads the bilayer; the sequence is VFFIVYLSIELYFIMNLLLAV. Topologically, residues 320 to 445 are cytoplasmic; it reads VFDTFNDIEK…NILVNSKAFQ (126 aa). The helical transmembrane segment at 446–466 threads the bilayer; sequence YFMYLVVAVNGVWILVETFML. The Extracellular portion of the chain corresponds to 467 to 480; it reads KGGNFISKHVPWSY. The chain crosses the membrane as a helical span at residues 481–501; that stretch reads LVFLTIYGVELFMKVAGLGPV. Topologically, residues 502–504 are cytoplasmic; sequence EYL. A helical transmembrane segment spans residues 505 to 527; that stretch reads SSGWNLFDFSVTAFAFLGLLALT. Residues 528–535 lie on the Extracellular side of the membrane; sequence LNMEPFYF. The chain crosses the membrane as a helical span at residues 536–550; the sequence is IVVLRPLQLLRLFKL. The Cytoplasmic portion of the chain corresponds to 551 to 574; the sequence is KKRYRNVLDTMFELLPRMASLGLT. A helical transmembrane segment spans residues 575 to 595; it reads LLTFYYSFAIVGMEFFSGRLS. Residues 596–630 are Extracellular-facing; that stretch reads PNCCNSSTVADAYRFINHTVGNKTKVEEGYYYLNN. The helical; Pore-forming intramembrane region spans 631–654; the sequence is FDNILNSFVTLFELTVVNNWYIIM. Residues 655 to 671 lie on the Extracellular side of the membrane; sequence EGVTSQTSHWSRLYFMT. Residues 672 to 692 form a helical membrane-spanning segment; the sequence is FYIVTMVVMTIIVAFILEAFV. Over 693–817 the chain is Cytoplasmic; that stretch reads FRMNYSRKSQ…GSRQRSQTVT (125 aa). A coiled-coil region spans residues 770–794; the sequence is SLKMYQEEIQEWYEEHAREQEQQQL. The segment at 785 to 817 is disordered; it reads HAREQEQQQLRGSAPSPAAQQTPGSRQRSQTVT. The segment covering 802–817 has biased composition (polar residues); it reads AAQQTPGSRQRSQTVT.

Belongs to the calcium channel alpha-1 subunit (TC 1.A.1.11) family. Two pore calcium channel subfamily. As to quaternary structure, dimer. Interacts with MTOR; the interaction is required for TPCN1 ATP sensitivity. Interacts with STX7, STX8 and STX12. Interacts with JPT2. Found in a complex with LSM12, TPCN1 and TPCN2. Post-translationally, N-glycosylated. In terms of tissue distribution, widely expressed. Expressed at relatively high level in kidney, liver and lung, and in the kidney it is expressed at inner medullary collecting ducts.

Its subcellular location is the lysosome membrane. It localises to the endosome membrane. The protein localises to the early endosome membrane. It is found in the recycling endosome membrane. The catalysed reaction is Na(+)(in) = Na(+)(out). The enzyme catalyses Ca(2+)(in) = Ca(2+)(out). Na(+) current is inhibited by ATP in a MTORC-dependent manner. ATP sensitivity is independent of PI(3,5)P2. Probably regulated by Mg(2+) ions, cytosolic Mg(2+) selectively inhibits outward current while lysosomal Mg(2+) modestly inhibits both the outward and inward currents. In the absence of Mg(2+), NAADP readily activates TPCN2, with properties similar to PI(3,5)P2. Both current elicited by PI(3,5)P2 as well as NAADP are inhibited by tetrandrine. In terms of biological role, intracellular channel initially characterized as a non-selective Ca(2+)-permeable channel activated by NAADP (nicotinic acid adenine dinucleotide phosphate), it is also a voltage-gated highly-selective Na(+) channel activated directly by PI(3,5)P2 (phosphatidylinositol 3,5-bisphosphate) that senses pH changes and confers electrical excitability to organelles. Localizes to the early and recycling endosomes membranes where it plays a role in the uptake and processing of proteins and regulates organellar membrane excitability, membrane trafficking and pH homeostasis. Ion selectivity is not fixed but rather agonist-dependent and under defined ionic conditions, can be readily activated by both NAADP and PI(3,5)P2. Required for mTOR-dependent nutrient sensing. The chain is Two pore calcium channel protein 1 (Tpcn1) from Rattus norvegicus (Rat).